The primary structure comprises 63 residues: Large ribosomal subunit protein bL35 (63 aa).

Residues 24–44 form a disordered region; sequence RAKAYRSHRATGKTTKQKRQL.

This sequence belongs to the bacterial ribosomal protein bL35 family.

This Mycoplasma mycoides subsp. mycoides SC (strain CCUG 32753 / NCTC 10114 / PG1) protein is Large ribosomal subunit protein bL35.